Consider the following 163-residue polypeptide: Nucleotide-binding protein YajQ (163 aa).

It belongs to the YajQ family.

In terms of biological role, nucleotide-binding protein. The polypeptide is Nucleotide-binding protein YajQ (Salmonella heidelberg (strain SL476)).